We begin with the raw amino-acid sequence, 505 residues long: Deoxyguanosinetriphosphate triphosphohydrolase (505 aa).

The 208-residue stretch at 66-273 (RLTHSMEVQQ…MEAADDISYC (208 aa)) folds into the HD domain.

It belongs to the dGTPase family. Type 1 subfamily. As to quaternary structure, homotetramer. Mg(2+) is required as a cofactor.

It carries out the reaction dGTP + H2O = 2'-deoxyguanosine + triphosphate + H(+). In terms of biological role, dGTPase preferentially hydrolyzes dGTP over the other canonical NTPs. The polypeptide is Deoxyguanosinetriphosphate triphosphohydrolase (Escherichia fergusonii (strain ATCC 35469 / DSM 13698 / CCUG 18766 / IAM 14443 / JCM 21226 / LMG 7866 / NBRC 102419 / NCTC 12128 / CDC 0568-73)).